The chain runs to 55 residues: Large ribosomal subunit protein bL33 (55 aa).

Belongs to the bacterial ribosomal protein bL33 family.

The sequence is that of Large ribosomal subunit protein bL33 from Klebsiella pneumoniae (strain 342).